The following is a 463-amino-acid chain: Argininosuccinate lyase (463 aa).

The protein belongs to the lyase 1 family. Argininosuccinate lyase subfamily.

The protein localises to the cytoplasm. The enzyme catalyses 2-(N(omega)-L-arginino)succinate = fumarate + L-arginine. It participates in amino-acid biosynthesis; L-arginine biosynthesis; L-arginine from L-ornithine and carbamoyl phosphate: step 3/3. The sequence is that of Argininosuccinate lyase from Prochlorococcus marinus (strain NATL2A).